The primary structure comprises 311 residues: Energy-coupling factor transporter ATP-binding protein EcfA2 (311 aa).

Positions 3-265 (IKLKDVKFTF…IAFLEENNLQ (263 aa)) constitute an ABC transporter domain. 40 to 47 (GQTGSGKT) contacts ATP.

The protein belongs to the ABC transporter superfamily. Energy-coupling factor EcfA family. Forms a stable energy-coupling factor (ECF) transporter complex composed of 2 membrane-embedded substrate-binding proteins (S component), 2 ATP-binding proteins (A component) and 2 transmembrane proteins (T component).

It localises to the cell membrane. ATP-binding (A) component of a common energy-coupling factor (ECF) ABC-transporter complex. Unlike classic ABC transporters this ECF transporter provides the energy necessary to transport a number of different substrates. In Mycoplasmopsis synoviae (strain 53) (Mycoplasma synoviae), this protein is Energy-coupling factor transporter ATP-binding protein EcfA2.